The following is a 195-amino-acid chain: Probable GTP-binding protein EngB (195 aa).

In terms of domain architecture, EngB-type G spans 24 to 195; sequence ELPEIALAGR…EAWDAILEKL (172 aa). GTP contacts are provided by residues 32 to 39, 59 to 63, 77 to 80, 144 to 147, and 176 to 178; these read GRSNVGKS, GKTQL, DVPG, TKAD, and FSS. Residues S39 and T61 each coordinate Mg(2+).

It belongs to the TRAFAC class TrmE-Era-EngA-EngB-Septin-like GTPase superfamily. EngB GTPase family. The cofactor is Mg(2+).

Necessary for normal cell division and for the maintenance of normal septation. The polypeptide is Probable GTP-binding protein EngB (Streptococcus pneumoniae serotype 4 (strain ATCC BAA-334 / TIGR4)).